The following is a 568-amino-acid chain: Urocanate hydratase (568 aa).

NAD(+) contacts are provided by residues 58-59 (GG), Q136, 182-184 (GMG), E202, R207, 248-249 (NA), 269-273 (QTSAH), 279-280 (YL), and Y328. C416 is an active-site residue. Residue G498 participates in NAD(+) binding.

The protein belongs to the urocanase family. NAD(+) is required as a cofactor.

The protein localises to the cytoplasm. It carries out the reaction 4-imidazolone-5-propanoate = trans-urocanate + H2O. Its pathway is amino-acid degradation; L-histidine degradation into L-glutamate; N-formimidoyl-L-glutamate from L-histidine: step 2/3. In terms of biological role, catalyzes the conversion of urocanate to 4-imidazolone-5-propionate. This Photobacterium profundum (strain SS9) protein is Urocanate hydratase.